Reading from the N-terminus, the 473-residue chain is Bifunctional protein HldE (473 aa).

The interval 1–318 is ribokinase; that stretch reads MKLSMPRFDQ…RAIQREEGSE (318 aa). Position 194–197 (194–197) interacts with ATP; the sequence is NLSE. The active site involves Asp263. Positions 343–473 are cytidylyltransferase; it reads FTNGCFDILH…TAIVEKIRKN (131 aa).

In the N-terminal section; belongs to the carbohydrate kinase PfkB family. This sequence in the C-terminal section; belongs to the cytidylyltransferase family. Homodimer.

The catalysed reaction is D-glycero-beta-D-manno-heptose 7-phosphate + ATP = D-glycero-beta-D-manno-heptose 1,7-bisphosphate + ADP + H(+). It catalyses the reaction D-glycero-beta-D-manno-heptose 1-phosphate + ATP + H(+) = ADP-D-glycero-beta-D-manno-heptose + diphosphate. It functions in the pathway nucleotide-sugar biosynthesis; ADP-L-glycero-beta-D-manno-heptose biosynthesis; ADP-L-glycero-beta-D-manno-heptose from D-glycero-beta-D-manno-heptose 7-phosphate: step 1/4. The protein operates within nucleotide-sugar biosynthesis; ADP-L-glycero-beta-D-manno-heptose biosynthesis; ADP-L-glycero-beta-D-manno-heptose from D-glycero-beta-D-manno-heptose 7-phosphate: step 3/4. Catalyzes the phosphorylation of D-glycero-D-manno-heptose 7-phosphate at the C-1 position to selectively form D-glycero-beta-D-manno-heptose-1,7-bisphosphate. Its function is as follows. Catalyzes the ADP transfer from ATP to D-glycero-beta-D-manno-heptose 1-phosphate, yielding ADP-D-glycero-beta-D-manno-heptose. This Pseudomonas putida (strain ATCC 47054 / DSM 6125 / CFBP 8728 / NCIMB 11950 / KT2440) protein is Bifunctional protein HldE.